A 553-amino-acid polypeptide reads, in one-letter code: Solute carrier family 45 member 3 (553 aa).

The next 11 membrane-spanning stretches (helical) occupy residues 19-39 (LLVNLLTFGLEVCLAAGITYV), 52-72 (FMTMVLGIGPVLGLVSVPLLG), 88-108 (FIWALSLGVLLSLFLIPRAGW), 120-140 (LELALLILGVGLLDFCGQVCF), 161-181 (FSVYAFMISLGGCLGYLLPAI), 198-218 (CLFGLLTLIFLICMAATLFVT), 275-295 (FVAELCSWMALMTFTLFYTDF), 323-343 (MGSLGLFLQCAISLVFSLVMD), 353-373 (SVYLASVMTFPVAAAATCLSH), 382-402 (AALTGFTFSALQILPYTLASL), and 522-542 (AYMVSAAGLGLVAIYFATQVV).

The protein belongs to the glycoside-pentoside-hexuronide (GPH) cation symporter transporter (TC 2.A.2) family. Expressed in the epididymis. Primarily expressed in the prostate, but also in other tissues.

The protein resides in the membrane. It catalyses the reaction sucrose(out) + H(+)(out) = sucrose(in) + H(+)(in). Its function is as follows. Proton-associated sucrose transporter. May be able to transport also glucose and fructose. This chain is Solute carrier family 45 member 3 (Slc45a3), found in Mus musculus (Mouse).